The chain runs to 216 residues: MITVALAKGALLKDSVTRFAKAGLDFSAVLDPSNRQLMVPSECGRAKALLVRNGDVPVYVAYGQAQLGVVGFDVLSEHQMPVANLVDLSFGECHMAVAVKETSHYRSAADLPAHCRVASKFTNCARRFFEDIDLPVELVHLTGSVELGPLTGMAEAIVDLVATGRTLRENGLIEIDHLFDSTARLIGHPLSLRLDSGDLRSVVEAMNTNDKSIPFK.

Belongs to the ATP phosphoribosyltransferase family. Short subfamily. Heteromultimer composed of HisG and HisZ subunits.

It localises to the cytoplasm. It carries out the reaction 1-(5-phospho-beta-D-ribosyl)-ATP + diphosphate = 5-phospho-alpha-D-ribose 1-diphosphate + ATP. It participates in amino-acid biosynthesis; L-histidine biosynthesis; L-histidine from 5-phospho-alpha-D-ribose 1-diphosphate: step 1/9. In terms of biological role, catalyzes the condensation of ATP and 5-phosphoribose 1-diphosphate to form N'-(5'-phosphoribosyl)-ATP (PR-ATP). Has a crucial role in the pathway because the rate of histidine biosynthesis seems to be controlled primarily by regulation of HisG enzymatic activity. The polypeptide is ATP phosphoribosyltransferase (Prochlorococcus marinus (strain MIT 9211)).